We begin with the raw amino-acid sequence, 608 residues long: Putative pentatricopeptide repeat-containing protein At1g16830 (608 aa).

13 PPR repeats span residues 107–141 (KPRV…GFVP), 142–172 (NTRA…IRFR), 173–210 (NFFS…GFYP), 211–245 (NRER…GISV), 246–280 (SVNV…GCSP), 281–315 (NLVT…GLAP), 316–350 (DIVL…KLVP), 351–381 (DQYT…IGTD), 383–417 (DLVT…DFAL), 418–452 (DCYT…KKHL), 453–487 (DAHF…KYPL), 488–522 (DVVS…GIYP), and 523–557 (NRRT…GVEL).

It belongs to the PPR family. P subfamily.

The sequence is that of Putative pentatricopeptide repeat-containing protein At1g16830 from Arabidopsis thaliana (Mouse-ear cress).